Reading from the N-terminus, the 202-residue chain is N-(5'-phosphoribosyl)anthranilate isomerase (202 aa).

It belongs to the TrpF family.

It catalyses the reaction N-(5-phospho-beta-D-ribosyl)anthranilate = 1-(2-carboxyphenylamino)-1-deoxy-D-ribulose 5-phosphate. It functions in the pathway amino-acid biosynthesis; L-tryptophan biosynthesis; L-tryptophan from chorismate: step 3/5. In Bacillus cereus (strain ATCC 14579 / DSM 31 / CCUG 7414 / JCM 2152 / NBRC 15305 / NCIMB 9373 / NCTC 2599 / NRRL B-3711), this protein is N-(5'-phosphoribosyl)anthranilate isomerase.